Consider the following 514-residue polypeptide: MEISWGRAMWRNFLGQSPDWYKLALLVFLIINPFIFLANPFIAGWLLVAEFIFTLAMALKCYPLLPGGLLAIEAVIIGMTSAAHVREEVAANLEVLLLLMFMVAGIYFMKQLLLFIFTRLLLSIRSKMVLSLAFCVAAAFLSAFLDALTVVAVVISVAVGFYGIYHRVASSRGEENDMLDDSHIDPHYKTVLEQFRGFLRSLMMHAGVGTALGGVMTMVGEPQNLIIAKAAGWHFGDFFLRMSPVTVPVLVCGLLTCMLVEKMRWFGYGETLPEKVRDVLQQFDDQSRKKRTRQDKIKLIVQAIIGVWLVTALALHLAEVGLIGLSVIILATALTGVTDEHAIGKAFTESLPFTALLTVFFSIVAVIIDQHLFAPIIQFVLQASEHAQLTLFYLFNGLLSSISDNVFVGTIYINEAKAAMENGAISLKQFELLAVAINTGTNLPSVATPNGQAAFLFLLTSALAPLIRLSYGRMVWMALPYTIVLTLIGLLCVEFTLAPATEWMTQAGWLATLS.

12 helical membrane-spanning segments follow: residues 23–43 (LALL…PFIA), 63–83 (PLLP…TSAA), 97–117 (LLLM…LFIF), 120–140 (LLLS…AAAF), 144–164 (FLDA…FYGI), 202–222 (LMMH…VGEP), 238–258 (FFLR…LTCM), 303–323 (AIIG…VGLI), 357–377 (LTVF…APII), 391–411 (LFYL…VGTI), 447–467 (ATPN…APLI), and 475–495 (VWMA…CVEF).

It belongs to the NhaB Na(+)/H(+) (TC 2.A.34) antiporter family.

It localises to the cell inner membrane. The catalysed reaction is 2 Na(+)(in) + 3 H(+)(out) = 2 Na(+)(out) + 3 H(+)(in). Na(+)/H(+) antiporter that extrudes sodium in exchange for external protons. This Salmonella paratyphi B (strain ATCC BAA-1250 / SPB7) protein is Na(+)/H(+) antiporter NhaB.